Here is a 236-residue protein sequence, read N- to C-terminus: Probable transcriptional regulatory protein UU295 (236 aa).

The protein belongs to the TACO1 family.

It localises to the cytoplasm. This Ureaplasma parvum serovar 3 (strain ATCC 700970) protein is Probable transcriptional regulatory protein UU295.